The chain runs to 282 residues: Ubiquinone biosynthesis protein COQ4 homolog, mitochondrial (282 aa).

Residues 1-30 constitute a mitochondrion transit peptide; the sequence is MFVRKSCYSLINATRRCLRYRQLSSTTAGT. 4 residues coordinate Zn(2+): H186, D187, H190, and E202.

It belongs to the COQ4 family. In terms of assembly, component of a multi-subunit COQ enzyme complex. Zn(2+) is required as a cofactor.

The protein resides in the mitochondrion inner membrane. The enzyme catalyses a 4-hydroxy-3-methoxy-5-(all-trans-polyprenyl)benzoate + H(+) = a 2-methoxy-6-(all-trans-polyprenyl)phenol + CO2. It functions in the pathway cofactor biosynthesis; ubiquinone biosynthesis. Its function is as follows. Lyase that catalyzes the C1-decarboxylation of 4-hydroxy-3-methoxy-5-(all-trans-polyprenyl)benzoic acid into 2-methoxy-6-(all-trans-polyprenyl)phenol during ubiquinone biosynthesis. This is Ubiquinone biosynthesis protein COQ4 homolog, mitochondrial from Anopheles gambiae (African malaria mosquito).